Consider the following 137-residue polypeptide: Large ribosomal subunit protein uL16 (137 aa).

Belongs to the universal ribosomal protein uL16 family. Part of the 50S ribosomal subunit.

Functionally, binds 23S rRNA and is also seen to make contacts with the A and possibly P site tRNAs. This Streptococcus sanguinis (strain SK36) protein is Large ribosomal subunit protein uL16.